Here is a 535-residue protein sequence, read N- to C-terminus: Succinate-semialdehyde dehydrogenase, mitochondrial (535 aa).

Residues 1–47 constitute a mitochondrion transit peptide; the sequence is MATCIWLRSCGARRLGWTFPGCRLRPRAGGLVPASGPAPGPAQLRCY. Lysine 126 carries the N6-acetyllysine; alternate modification. Lysine 126 carries the post-translational modification N6-succinyllysine; alternate. N6-succinyllysine is present on residues lysine 135 and lysine 184. Residues arginine 213 and 228–231 contribute to the NAD(+) site; that span reads KPAE. Residue arginine 213 coordinates substrate. Lysine 265 is subject to N6-acetyllysine; alternate. Lysine 265 is modified (N6-succinyllysine; alternate). 284–289 contributes to the NAD(+) binding site; sequence GSTTTG. The active-site Proton acceptor is the glutamate 306. Arginine 334 is a binding site for substrate. Residue cysteine 340 is the Nucleophile of the active site. A disulfide bridge connects residues cysteine 340 and cysteine 342. Lysine 365 is modified (N6-acetyllysine). Lysine 402 is subject to N6-succinyllysine. The residue at position 411 (lysine 411) is an N6-acetyllysine. Serine 498 lines the substrate pocket. Position 499 is a phosphoserine (serine 499).

The protein belongs to the aldehyde dehydrogenase family. Homotetramer.

The protein localises to the mitochondrion. The enzyme catalyses succinate semialdehyde + NAD(+) + H2O = succinate + NADH + 2 H(+). It participates in amino-acid degradation; 4-aminobutanoate degradation. With respect to regulation, redox-regulated. Inhibited under oxydizing conditions. Functionally, catalyzes one step in the degradation of the inhibitory neurotransmitter gamma-aminobutyric acid (GABA). The sequence is that of Succinate-semialdehyde dehydrogenase, mitochondrial (ALDH5A1) from Pan paniscus (Pygmy chimpanzee).